The primary structure comprises 309 residues: 11-beta-hydroxysteroid dehydrogenase-like 3 (309 aa).

Residues 10 to 30 form a helical; Signal-anchor for type II membrane protein membrane-spanning segment; it reads LLLPPLTIIFLFLFYPFYLLI. Residues 54 to 80 and Asp-105 each bind NADP(+); that span reads GASS…VARR. Residue Ser-184 coordinates substrate. Catalysis depends on Tyr-197, which acts as the Proton acceptor. Residues 197–201 and Lys-201 each bind NADP(+); that span reads YAASK.

It belongs to the short-chain dehydrogenases/reductases (SDR) family.

It is found in the membrane. This Arabidopsis thaliana (Mouse-ear cress) protein is 11-beta-hydroxysteroid dehydrogenase-like 3 (HSD3).